Consider the following 485-residue polypeptide: MTSRTKSSKNLGTIALAGMVVSSIIGGGIFSLPQNMAATAGAGAVILSWILTGFGMFFIANTFRILSTIRPDLKEGIYMYSREGFGPYIGFTIGWGYWLCQIFGNVGYAVITMDALNYFFPPYFQGGNTLPAILGGSILIWVFNFIVLKGIRQASIINVIGTIFKIIPLIIFIILTAFFFKLAVFKTDFWGHAVTKAQPSLGSVSSQLKGTMLVTLWAFIGIEGAVVMSGRAKNPLSVGQATVLGFLGCLTIYILFSLLPFGSLFQHQLANIPNPSTAGVLDILVGKWGEVLMNVGLIIAVLSSWLSWTIIVAEIPFSAAKNGTFPEIFTIENKEKSPSVSLYITSSVMQLAMLLVYFSSNAWNTMLSITGVMVLPAYLASAAFLFKLSKSKTYPKKGSIKAPLAMITGILGVVYSLWLIYAGGLKYLFMALVLLALGIPFYIDAGKKKKNAKTFFAKKEIVGMTFIGLLALTAIFLFSTGRIKI.

A run of 12 helical transmembrane segments spans residues 12 to 34 (GTIA…SLPQ), 38 to 60 (ATAG…FFIA), 89 to 111 (IGFT…YAVI), 126 to 148 (GGNT…FIVL), 155 to 177 (SIIN…ILTA), 211 to 230 (TMLV…VMSG), 243 to 265 (VLGF…GSLF), 291 to 313 (VLMN…IIVA), 363 to 385 (WNTM…AAFL), 400 to 422 (IKAP…LIYA), 427 to 446 (YLFM…IDAG), and 461 to 483 (IVGM…TGRI).

It belongs to the amino acid-polyamine-organocation (APC) superfamily. Basic amino acid/polyamine antiporter (APA) (TC 2.A.3.2) family.

Its subcellular location is the cell inner membrane. Catalyzes the exchange of L-arginine for agmatine. The arginine uptake by the bacterium in the macrophage may be a virulence factor against the host innate immune response. The chain is Arginine/agmatine antiporter (aaxC) from Chlamydia pneumoniae (Chlamydophila pneumoniae).